A 344-amino-acid polypeptide reads, in one-letter code: MSNPILLGIFWHFIGAASAACFYAPFKQVKNWSWETMWSLGGFFSWIILPWCISWWLLPDFWRYYGSFDMATLLPIFLFGAMWGIGNINYGLTMRYLSMSMGIGIAIGVTLIIGTLMTPVLQGKFSVLFGSAGGRMTLLGVLVAVIGVAIVSYAGLLKERVLGIRAEEFNLKKGLILAVMCGIFSAGMSFAMDAAKPMHAAAQAQGINALYVALPSYVVIMGGGAVVNLGFCFMRLATCKGISLKADLAQAKPLLIANALFAILGGVMWYLQFFFYAWGHANIPADYTYISWMLHMSFYVLCGGIVGLLFKEWKSVGQKPVRTLVLGCMVIILAANVVGLGMAA.

A run of 10 helical transmembrane segments spans residues 4-24, 38-58, 68-88, 101-121, 137-157, 175-195, 207-227, 255-275, 290-310, and 324-344; these read PILL…CFYA, WSLG…WWLL, FDMA…IGNI, MGIG…TPVL, TLLG…AGLL, LILA…MDAA, INAL…GAVV, LIAN…QFFF, ISWM…GLLF, and LVLG…GMAA.

Belongs to the L-rhamnose transporter (TC 2.A.7.6) family.

It localises to the cell inner membrane. The enzyme catalyses L-rhamnopyranose(in) + H(+)(in) = L-rhamnopyranose(out) + H(+)(out). Its function is as follows. Uptake of L-rhamnose across the cytoplasmic membrane with the concomitant transport of protons into the cell (symport system). This Pectobacterium carotovorum subsp. carotovorum (strain PC1) protein is L-rhamnose-proton symporter.